We begin with the raw amino-acid sequence, 453 residues long: T-box transcription factor T homolog (453 aa).

Residues 47–217 (LWRRFSKLTN…YNPFAKAFLD (171 aa)) constitute a DNA-binding region (T-box). A disordered region spans residues 283–304 (RSHRSTPYPPPPYEQKYSPTSA).

It is found in the nucleus. Functionally, may be involved in the transcriptional regulation of genes required for gastrulation. This is T-box transcription factor T homolog from Patiria pectinifera (Starfish).